A 131-amino-acid polypeptide reads, in one-letter code: MKIALIAHDKKKDDMVSFAYAYKPIFEKHELFATGTTGLRIMEATGLVVTRYQSGPLGGDQEIGAMIAKNEMDMVIFFRDPLTAQPHEPDVNALLRLCDVYAIPLATNMASAEMLMHALERGDLDYRKLRK.

The MGS-like domain maps to 1–131 (MKIALIAHDK…GDLDYRKLRK (131 aa)). Residues histidine 8, lysine 12, 34–37 (TGTT), and 54–55 (SG) contribute to the substrate site. Aspartate 60 (proton donor/acceptor) is an active-site residue. A substrate-binding site is contributed by histidine 87.

It belongs to the methylglyoxal synthase family.

The enzyme catalyses dihydroxyacetone phosphate = methylglyoxal + phosphate. Its function is as follows. Catalyzes the formation of methylglyoxal from dihydroxyacetone phosphate. This is Methylglyoxal synthase from Bacillus mycoides (strain KBAB4) (Bacillus weihenstephanensis).